The following is a 257-amino-acid chain: Snake venom serine protease BITS01A (257 aa).

The first 18 residues, 1 to 18 (MVLIRVIANLLILQVSYA), serve as a signal peptide directing secretion. The propeptide occupies 19–24 (QKSSEL). Positions 25–248 (VVGGDECDIN…YLPWIQSIIA (224 aa)) constitute a Peptidase S1 domain. 6 cysteine pairs are disulfide-bonded: C31/C162, C49/C65, C97/C255, C141/C209, C173/C188, and C199/C224. H64 (charge relay system) is an active-site residue. N-linked (GlcNAc...) asparagine glycosylation occurs at N101. D109 (charge relay system) is an active-site residue. N-linked (GlcNAc...) asparagine glycosylation is found at N121, N153, and N169. S203 (charge relay system) is an active-site residue. 2 N-linked (GlcNAc...) asparagine glycosylation sites follow: N210 and N250.

This sequence belongs to the peptidase S1 family. Snake venom subfamily. Monomer. Expressed by the venom gland.

The protein resides in the secreted. Functionally, snake venom serine protease that may act in the hemostasis system of the prey. The chain is Snake venom serine protease BITS01A from Bothrops insularis (Golden lancehead).